We begin with the raw amino-acid sequence, 190 residues long: Small ribosomal subunit protein mS23 (190 aa).

Residue A2 is modified to N-acetylalanine. N6-acetyllysine is present on K102. Positions 139 to 190 are disordered; it reads RTQHGGSHVSRKSEHLSVRPQTALEENETQKEVPQDQHLEAPADQSKGLLPP. Over residues 166-179 the composition is skewed to basic and acidic residues; it reads ETQKEVPQDQHLEA.

The protein belongs to the mitochondrion-specific ribosomal protein mS23 family. In terms of assembly, component of the mitochondrial small ribosomal subunit (mt-SSU). Mature mammalian 55S mitochondrial ribosomes consist of a small (28S) and a large (39S) subunit. The 28S small subunit contains a 12S ribosomal RNA (12S mt-rRNA) and 30 different proteins. The 39S large subunit contains a 16S rRNA (16S mt-rRNA), a copy of mitochondrial valine transfer RNA (mt-tRNA(Val)), which plays an integral structural role, and 52 different proteins.

It localises to the mitochondrion. The protein is Small ribosomal subunit protein mS23 (MRPS23) of Homo sapiens (Human).